We begin with the raw amino-acid sequence, 181 residues long: Shikimate kinase (181 aa).

23-28 is a binding site for ATP; the sequence is GTGKST. Mg(2+) is bound at residue serine 27. Aspartate 45, arginine 69, and glycine 91 together coordinate substrate. Arginine 129 is an ATP binding site. Arginine 148 contributes to the substrate binding site.

The protein belongs to the shikimate kinase family. Monomer. It depends on Mg(2+) as a cofactor.

The protein localises to the cytoplasm. The enzyme catalyses shikimate + ATP = 3-phosphoshikimate + ADP + H(+). It functions in the pathway metabolic intermediate biosynthesis; chorismate biosynthesis; chorismate from D-erythrose 4-phosphate and phosphoenolpyruvate: step 5/7. Its function is as follows. Catalyzes the specific phosphorylation of the 3-hydroxyl group of shikimic acid using ATP as a cosubstrate. The chain is Shikimate kinase from Geobacter sulfurreducens (strain ATCC 51573 / DSM 12127 / PCA).